Reading from the N-terminus, the 100-residue chain is Integration host factor subunit alpha (100 aa).

Belongs to the bacterial histone-like protein family. Heterodimer of an alpha and a beta chain.

Functionally, this protein is one of the two subunits of integration host factor, a specific DNA-binding protein that functions in genetic recombination as well as in transcriptional and translational control. The polypeptide is Integration host factor subunit alpha (Alcanivorax borkumensis (strain ATCC 700651 / DSM 11573 / NCIMB 13689 / SK2)).